The sequence spans 290 residues: Enoyl-CoA hydratase, mitochondrial (290 aa).

Residues 1-27 constitute a mitochondrion transit peptide; that stretch reads MAALRALLPRACSSLLSSVRCPELRRF. 98–101 provides a ligand contact to substrate; that stretch reads ADIK. At lysine 101 the chain carries N6-acetyllysine; alternate. The residue at position 101 (lysine 101) is an N6-succinyllysine; alternate. Serine 114 bears the Phosphoserine mark. Lysine 115 is subject to N6-acetyllysine; alternate. Residue lysine 115 is modified to N6-succinyllysine; alternate. A substrate-binding site is contributed by glycine 141. An N6-succinyllysine modification is found at lysine 204. The residue at position 211 (lysine 211) is an N6-acetyllysine. N6-acetyllysine; alternate is present on lysine 217. Position 217 is an N6-succinyllysine; alternate (lysine 217).

It belongs to the enoyl-CoA hydratase/isomerase family. Homohexamer; dimer of trimers. Post-translationally, acetylation of Lys-101 is observed in liver mitochondria from fasted mice but not from fed mice.

The protein localises to the mitochondrion matrix. The enzyme catalyses a (3S)-3-hydroxyacyl-CoA = a (2E)-enoyl-CoA + H2O. It catalyses the reaction a (3E)-enoyl-CoA = a 4-saturated (2E)-enoyl-CoA. The catalysed reaction is (3E)-hexenoyl-CoA = (2E)-hexenoyl-CoA. It carries out the reaction (3S)-3-hydroxybutanoyl-CoA = (2E)-butenoyl-CoA + H2O. The enzyme catalyses 3-hydroxyisovaleryl-CoA = 3-methylbut-2-enoyl-CoA + H2O. It catalyses the reaction 3-hydroxypropanoyl-CoA = acryloyl-CoA + H2O. The catalysed reaction is 3-hydroxybutanoyl-CoA = (2E)-butenoyl-CoA + H2O. It carries out the reaction 2-methylpropenoyl-CoA + H2O = (S)-3-hydroxyisobutanoyl-CoA. The enzyme catalyses (3S)-hydroxyhexanoyl-CoA = (2E)-hexenoyl-CoA + H2O. It catalyses the reaction (3S)-hydroxydecanoyl-CoA = (2E)-decenoyl-CoA + H2O. The protein operates within lipid metabolism; fatty acid beta-oxidation. Functionally, converts unsaturated trans-2-enoyl-CoA species ((2E)-enoyl-CoA) to the corresponding (3S)-3-hydroxyacyl-CoA species through addition of a water molecule to the double bond. Catalyzes the hydration of medium- and short-chained fatty enoyl-CoA thioesters from 4 carbons long (C4) up to C16. Has high substrate specificity for crotonyl-CoA ((2E)-butenoyl-CoA) and moderate specificity for acryloyl-CoA, 3-methylcrotonyl-CoA (3-methyl-(2E)-butenoyl-CoA) and methacrylyl-CoA ((2E)-2-methylpropenoyl-CoA). Can bind tiglyl-CoA (2-methylcrotonoyl-CoA), but hydrates only a small amount of this substrate. Plays a key role in the beta-oxidation spiral of short- and medium-chain fatty acid oxidation. At a lower rate than the hydratase reaction, catalyzes the isomerase reaction of trans-3-enoyl-CoA species (such as (3E)-hexenoyl-CoA) to trans-2-enoyl-CoA species (such as (2E)-hexenoyl-CoA), which are subsequently hydrated to 3(S)-3-hydroxyacyl-CoA species (such as (3S)-hydroxyhexanoyl-CoA). This is Enoyl-CoA hydratase, mitochondrial from Mus musculus (Mouse).